Reading from the N-terminus, the 489-residue chain is Pluviatolide synthase (489 aa).

The helical transmembrane segment at 6-26 (SVLGLSSTLIIALAITVIFLL) threads the bilayer. Cysteine 432 is a binding site for heme.

This sequence belongs to the cytochrome P450 family. It depends on heme as a cofactor.

The protein resides in the membrane. The catalysed reaction is (-)-matairesinol + reduced [NADPH--hemoprotein reductase] + O2 = (-)-pluviatolide + oxidized [NADPH--hemoprotein reductase] + 2 H2O + H(+). It functions in the pathway aromatic compound metabolism; phenylpropanoid biosynthesis. Its function is as follows. Cytochrome P450 involved in the biosynthesis of etoposide, a chemotherapeutic compound of the topoisomerase inhibitor family. Catalyzes the conversion of matairesinol to pluviatolide. The polypeptide is Pluviatolide synthase (Podophyllum peltatum (American mandrake)).